The sequence spans 256 residues: Dioxygenase lolE1 (256 aa).

3 residues coordinate Fe cation: H125, D127, and H203.

Belongs to the PhyH family. As to quaternary structure, homodimer. Fe cation serves as cofactor.

It functions in the pathway alkaloid biosynthesis. Dioxygenase; part of the gene cluster that mediates the biosynthesis of loline alkaloids, potent insecticidal agents composed of a pyrrolizidine ring system and an uncommon ether bridge linking carbons 2 and 7. Lolines are structurally differentiated by the various modifications of the L-amino group and include norloline, loline, N-methylloline, N-acetylloline, N-acetylnorloline, and N-formylloline. The first committed step is the condensation of O-acetyl-L-homoserine (derived from L-aspartic acid) and L-proline, probably catalyzed by the gamma-type pyridoxal 5'-phosphate(PLP)-dependent enzyme lolC, to give the diamino diacid, NACPP. Ensuing cyclization, decarboxylation, and acetylation steps yield 1-exo-acetamidopyrrolizidine (AcAP). LolO is required for installation of the ether bridge upon the pathway intermediate, 1-exo-acetamidopyrrolizidine (AcAP). In sequential 2-oxoglutarate- and O(2)-consuming steps, lolO removes hydrogens from C2 and C7 of AcAP to form both carbon-oxygen bonds in N-acetylnorloline (NANL), the precursor to all other lolines. The enzymes lolD, lolE, lolF and lolT have also been proposed to be involved in the ether-bridge installation. Further processing of the exocyclic moiety of NANL by fungal N-acetamidase (LolN), methyltransferase (LolM), and cytochrome P450 (LolP) enzymes, with occasional involvement of a plant acetyltransferase, generates the other known lolines. LolN transforms NANL to norlonine which is monomethylated and dimethylated to respectively lonine and N-methyllonine (NML) by lolM. LolP catalyzes hydroxylation of the methyl group in N-methylloline (NML) and further oxygenation to N-formylloline (NFL). A plant acetyltransferase is responsible for the acetylation of loline to form N-acetylloline (NAL). LolA might interact with aspartate kinase to prevent feedback inhibition of its activity by these end products and thereby promote production of L-homoserine from L-aspartate. In Epichloe uncinata (Endophyte fungus), this protein is Dioxygenase lolE1.